The primary structure comprises 116 residues: U3-theraphotoxin-Lsp1a (116 aa).

A signal peptide spans 1-17 (MKLSTFIIMISLAVALA). Positions 18–50 (TWPSEHIEGSDSETKLNVELGPYALADRAEKGK) are excised as a propeptide.

This sequence belongs to the neurotoxin 25 family. F7 subfamily. In terms of processing, contains 3 disulfide bonds. As to expression, expressed by the venom gland.

It localises to the secreted. The chain is U3-theraphotoxin-Lsp1a from Lasiodora sp. (strain IBSP 8539) (Brazilian salmon pink birdeater).